Reading from the N-terminus, the 312-residue chain is Cell division control protein 2 homolog D (312 aa).

Positions 14–304 (FVKLEKVGEG…AKKAMEHPYF (291 aa)) constitute a Protein kinase domain. Residues 20-28 (VGEGTYGKV) and Lys-43 each bind ATP. The residue at position 24 (Thr-24) is a Phosphothreonine. Residue Tyr-25 is modified to Phosphotyrosine. The active-site Proton acceptor is Asp-145. A Phosphothreonine; by CAK modification is found at Thr-179.

Belongs to the protein kinase superfamily. CMGC Ser/Thr protein kinase family. CDC2/CDKX subfamily.

The catalysed reaction is L-seryl-[protein] + ATP = O-phospho-L-seryl-[protein] + ADP + H(+). It carries out the reaction L-threonyl-[protein] + ATP = O-phospho-L-threonyl-[protein] + ADP + H(+). The enzyme catalyses [DNA-directed RNA polymerase] + ATP = phospho-[DNA-directed RNA polymerase] + ADP + H(+). Its function is as follows. Plays a key role in the control of the eukaryotic cell cycle. The protein is Cell division control protein 2 homolog D (CDC2D) of Antirrhinum majus (Garden snapdragon).